The sequence spans 123 residues: Venom protein 29 (123 aa).

The signal sequence occupies residues 1 to 18; sequence MNKLFLFTLLVTLWSVKG.

Contains 3 disulfide bonds. As to expression, expressed by the venom gland.

The protein resides in the secreted. The polypeptide is Venom protein 29 (Lychas mucronatus (Chinese swimming scorpion)).